A 234-amino-acid chain; its full sequence is Arsenate respiratory reductase iron-sulfur subunit ArrB (234 aa).

4Fe-4S ferredoxin-type domains are found at residues 3 to 32 (LGMVIDLQKCVGCGGCSLACKTENNTNDGI), 48 to 79 (VKYTYIPTLCNHCDDAPCVKVCPTGAMHKDKR), and 80 to 109 (GLTLQNNDECIGCKKCMNACPYGVISFNAA). Positions 12, 15, 18, 22, 57, 60, 65, 69, 89, 92, 95, 99, 164, 167, 179, and 183 each coordinate [4Fe-4S] cluster.

As to quaternary structure, heterodimer composed of one large subunit (ArrA) and one small subunit (ArrB). It depends on [4Fe-4S] cluster as a cofactor.

The protein resides in the periplasm. Phosphate is a competitive inhibitor. Component of the arsenate respiratory reductase (Arr) complex, which catalyzes the reduction of arsenate (As(V)) to arsenite (As(III)). ArrB is probably the electron transfer subunit. The periplasmic localization of this complex may allow the cell to couple arsenate reduction to energy production before arsenate can be transported to the cell cytoplasm and enter the ars detoxification pathway, an energy-requiring process. This is Arsenate respiratory reductase iron-sulfur subunit ArrB from Shewanella sp. (strain ANA-3).